We begin with the raw amino-acid sequence, 206 residues long: Probable chemoreceptor glutamine deamidase CheD (206 aa).

It belongs to the CheD family.

It carries out the reaction L-glutaminyl-[protein] + H2O = L-glutamyl-[protein] + NH4(+). Probably deamidates glutamine residues to glutamate on methyl-accepting chemotaxis receptors (MCPs), playing an important role in chemotaxis. The chain is Probable chemoreceptor glutamine deamidase CheD from Laribacter hongkongensis (strain HLHK9).